The following is a 226-amino-acid chain: Putative N-acetylmannosamine-6-phosphate 2-epimerase (226 aa).

This sequence belongs to the NanE family.

It carries out the reaction an N-acyl-D-glucosamine 6-phosphate = an N-acyl-D-mannosamine 6-phosphate. It functions in the pathway amino-sugar metabolism; N-acetylneuraminate degradation; D-fructose 6-phosphate from N-acetylneuraminate: step 3/5. In terms of biological role, converts N-acetylmannosamine-6-phosphate (ManNAc-6-P) to N-acetylglucosamine-6-phosphate (GlcNAc-6-P). The chain is Putative N-acetylmannosamine-6-phosphate 2-epimerase from Mycoplasma capricolum subsp. capricolum (strain California kid / ATCC 27343 / NCTC 10154).